A 72-amino-acid chain; its full sequence is Gas vesicle protein A (72 aa).

The protein belongs to the gas vesicle GvpA family. In terms of assembly, the gas vesicle shell is 2 nm thick and consists of a single layer of this protein. It forms helical ribs nearly perpendicular to the long axis of the vesicle.

Its subcellular location is the gas vesicle shell. Gas vesicles are hollow, gas filled proteinaceous nanostructures found in some microorganisms. During planktonic growth they allow positioning of the organism at a favorable depth for light or nutrient acquisition. GvpA forms the protein shell. This Synechococcus sp. (strain JA-3-3Ab) (Cyanobacteria bacterium Yellowstone A-Prime) protein is Gas vesicle protein A.